Consider the following 294-residue polypeptide: 4-hydroxy-tetrahydrodipicolinate synthase (294 aa).

Thr47 is a pyruvate binding site. The active-site Proton donor/acceptor is Tyr136. Lys164 functions as the Schiff-base intermediate with substrate in the catalytic mechanism. Pyruvate is bound at residue Val206.

This sequence belongs to the DapA family. In terms of assembly, homotetramer; dimer of dimers.

The protein resides in the cytoplasm. It carries out the reaction L-aspartate 4-semialdehyde + pyruvate = (2S,4S)-4-hydroxy-2,3,4,5-tetrahydrodipicolinate + H2O + H(+). The protein operates within amino-acid biosynthesis; L-lysine biosynthesis via DAP pathway; (S)-tetrahydrodipicolinate from L-aspartate: step 3/4. Its function is as follows. Catalyzes the condensation of (S)-aspartate-beta-semialdehyde [(S)-ASA] and pyruvate to 4-hydroxy-tetrahydrodipicolinate (HTPA). This is 4-hydroxy-tetrahydrodipicolinate synthase from Nostoc sp. (strain PCC 7120 / SAG 25.82 / UTEX 2576).